A 476-amino-acid polypeptide reads, in one-letter code: Glutamyl-tRNA(Gln) amidotransferase subunit A (476 aa).

Catalysis depends on charge relay system residues Lys69 and Ser144. Ser168 functions as the Acyl-ester intermediate in the catalytic mechanism.

It belongs to the amidase family. GatA subfamily. As to quaternary structure, heterotrimer of A, B and C subunits.

It carries out the reaction L-glutamyl-tRNA(Gln) + L-glutamine + ATP + H2O = L-glutaminyl-tRNA(Gln) + L-glutamate + ADP + phosphate + H(+). In terms of biological role, allows the formation of correctly charged Gln-tRNA(Gln) through the transamidation of misacylated Glu-tRNA(Gln) in organisms which lack glutaminyl-tRNA synthetase. The reaction takes place in the presence of glutamine and ATP through an activated gamma-phospho-Glu-tRNA(Gln). The protein is Glutamyl-tRNA(Gln) amidotransferase subunit A of Sulfolobus acidocaldarius (strain ATCC 33909 / DSM 639 / JCM 8929 / NBRC 15157 / NCIMB 11770).